We begin with the raw amino-acid sequence, 207 residues long: Frataxin, mitochondrial (207 aa).

A mitochondrion-targeting transit peptide spans 1–40 (MWAFGGRAAVGLLPRTASRASAWVGNPRWREPIVTCGRRG).

Belongs to the frataxin family. As to quaternary structure, component of the mitochondrial core iron-sulfur cluster (ISC) complex composed of NFS1, LYRM4, NDUFAB1, ISCU, FXN, and FDX2; this complex is a heterohexamer containing two copies of each monomer. Homodimer. Monomer (probable predominant form). Oligomer. Monomers and polymeric aggregates of &gt;1 MDa have been isolated from mitochondria. A small fraction of heterologous overexpressed recombinant frataxin forms high-molecular weight aggregates that incorporate iron. Interacts with LYRM4. Interacts (via ferrous form) with ISCU; the interaction is possible when both are bound to the dimeric form of the cysteine desulfurase complex (NFS1:LYRM4) and the interaction enhances FXN interaction to the dimeric form of the cysteine desulfurase complex (NFS1:LYRM4). Interacts with FECH; one iron-bound FXN monomer seems to interact with a FECH homodimer. Interacts with SDHA and SDHB. Interacts with ACO2; the interaction is dependent on citrate. Interacts with HSPA9. Component of a complex composed of FXN, NFS1, LYRM4 and ISCU. In terms of assembly, interacts with ACO1. Interacts with ISCU (cytoplasmic form). Processed in two steps by mitochondrial processing peptidase (MPP). MPP first cleaves the precursor to intermediate form and subsequently converts the intermediate to yield frataxin mature form (frataxin(81-210)) which is the predominant form. The additional forms, frataxin(56-210) and frataxin(78-210), seem to be produced when the normal maturation process is impaired; their physiological relevance is unsure. As to expression, heart, liver, skeletal muscle, kidney, spleen and thymus. Weakly expressed in the brain and lung.

The protein localises to the mitochondrion. Its subcellular location is the cytoplasm. It localises to the cytosol. The enzyme catalyses 4 Fe(2+) + O2 + 4 H(+) = 4 Fe(3+) + 2 H2O. Functions as an activator of persulfide transfer to the scaffoding protein ISCU as component of the core iron-sulfur cluster (ISC) assembly complex and participates to the [2Fe-2S] cluster assembly. Accelerates sulfur transfer from NFS1 persulfide intermediate to ISCU and to small thiols such as L-cysteine and glutathione leading to persulfuration of these thiols and ultimately sulfide release. Binds ferrous ion and is released from FXN upon the addition of both L-cysteine and reduced FDX2 during [2Fe-2S] cluster assembly. The core iron-sulfur cluster (ISC) assembly complex is involved in the de novo synthesis of a [2Fe-2S] cluster, the first step of the mitochondrial iron-sulfur protein biogenesis. This process is initiated by the cysteine desulfurase complex (NFS1:LYRM4:NDUFAB1) that produces persulfide which is delivered on the scaffold protein ISCU in a FXN-dependent manner. Then this complex is stabilized by FDX2 which provides reducing equivalents to accomplish the [2Fe-2S] cluster assembly. Finally, the [2Fe-2S] cluster is transferred from ISCU to chaperone proteins, including HSCB, HSPA9 and GLRX5. May play a role in the protection against iron-catalyzed oxidative stress through its ability to catalyze the oxidation of Fe(2+) to Fe(3+); the oligomeric form but not the monomeric form has in vitro ferroxidase activity. May be able to store large amounts of iron in the form of a ferrihydrite mineral by oligomerization; however, the physiological relevance is unsure as reports are conflicting and the function has only been shown using heterologous overexpression systems. May function as an iron chaperone protein that protects the aconitase [4Fe-4S]2+ cluster from disassembly and promotes enzyme reactivation. May play a role as a high affinity iron binding partner for FECH that is capable of both delivering iron to ferrochelatase and mediating the terminal step in mitochondrial heme biosynthesis. Functionally, modulates the RNA-binding activity of ACO1. May be involved in the cytoplasmic iron-sulfur protein biogenesis. May contribute to oxidative stress resistance and overall cell survival. In Mus musculus (Mouse), this protein is Frataxin, mitochondrial.